The sequence spans 431 residues: MLLKIKRVPTVVSNYQKDETVEEGGCGRNCLSKCCINGARLPLYTCKNLDKSVGENTESPVTFLESLVIGEWEDRFQRGLFRYDVTACETKVIPGKYGFIAQLNEGRHLKKRPTEFRVDKVLQPFDGNKFNFTKVGQEELLFQFKASTNDDDSEIQFLASMPLDADNSPSVVAINVSPIEYGHVLLIPRVLDCLPQRIDHKSLLLALQMAAEADNPYFRLGYNSLGAFATINHLHFQAYYLAMQFPIEKASSLKITTTNNGVKISKLLNYPVRGLLVEGGNTIKDLADTVSDASVCLQNNNIPFNILISDSGKRIFLLPQCYAEKQALGEVSSTLLDTQVNPAVWEMSGHMVLKRKEDYEGASEEKAWRLLAEVSLSEERFREVNTMIFDAIGFSSHEEEEEEELEEQNSMNGGSFTIVHCPSVKEEAVSN.

Catalysis depends on His235, which acts as the Tele-GMP-histidine intermediate. Acidic residues predominate over residues 398 to 407 (EEEEEEELEE). The segment at 398 to 417 (EEEEEEELEEQNSMNGGSFT) is disordered.

The protein belongs to the GDPGP1 family. Interacts with TLP1. As to expression, expressed in leaves, stems, roots, flowers and siliques.

It is found in the cytoplasm. Its subcellular location is the nucleus. It catalyses the reaction GDP-beta-L-galactose + phosphate = beta-L-galactose 1-phosphate + GDP + H(+). The protein operates within cofactor biosynthesis; L-ascorbate biosynthesis via GDP-alpha-D-mannose pathway; L-ascorbate from GDP-alpha-D-mannose: step 2/5. Catalyzes a reaction of the Smirnoff-Wheeler pathway, the major route to ascorbate biosynthesis in plants. Acts as a phosphorylase rather than as a transferase. Uses preferentially GDP-L-galactose and GDP-D-glucose as substrates. Lower activity with GDP-L-fucose, very low activity with GDP-D-mannose, and no activity with UDP-D-glucose, UDP-D-galactose or ADP-D-glucose. Highly specific for inorganic phosphate as the guanylyl acceptor. The sequence is that of GDP-L-galactose phosphorylase 2 (VTC5) from Arabidopsis thaliana (Mouse-ear cress).